Reading from the N-terminus, the 171-residue chain is Peptide deformylase 1 (171 aa).

2 residues coordinate Fe cation: cysteine 99 and histidine 141. The active site involves glutamate 142. Residue histidine 145 participates in Fe cation binding.

This sequence belongs to the polypeptide deformylase family. Requires Fe(2+) as cofactor.

It catalyses the reaction N-terminal N-formyl-L-methionyl-[peptide] + H2O = N-terminal L-methionyl-[peptide] + formate. Removes the formyl group from the N-terminal Met of newly synthesized proteins. Requires at least a dipeptide for an efficient rate of reaction. N-terminal L-methionine is a prerequisite for activity but the enzyme has broad specificity at other positions. The sequence is that of Peptide deformylase 1 from Xanthomonas campestris pv. campestris (strain ATCC 33913 / DSM 3586 / NCPPB 528 / LMG 568 / P 25).